A 1465-amino-acid chain; its full sequence is Gag-Pol polyprotein (1465 aa).

The N-myristoyl glycine; by host moiety is linked to residue glycine 2. A Nuclear export signal motif is present at residues 16-22 (FEHIRLR). A Nuclear localization signal motif is present at residues 26–32 (KKKYQIK). Residues 116 to 144 (NAERNTTETSSGQKKNDKGVTVPPGGSQN) form a disordered region. 2 consecutive CCHC-type zinc fingers follow at residues 402-419 (VKCY…QCPE) and 423-440 (MRCL…DCRG). Positions 532–603 (IRALLDTGAD…TPINIIGRNI (72 aa)) constitute a Peptidase A2 domain. The active-site For protease activity; shared with dimeric partner is the aspartate 537. Positions 659 to 849 (EGKISKIGGE…PPYEWMGYKL (191 aa)) constitute a Reverse transcriptase domain. Aspartate 725, aspartate 800, and aspartate 801 together coordinate Mg(2+). An RT 'primer grip' region spans residues 842–850 (YEWMGYKLW). Positions 1012 to 1028 (WEQWWADYWQVSWIPDW) match the Tryptophan repeat motif motif. Residues 1048 to 1171 (IPKEDVYYVD…IDKLVSQGMR (124 aa)) form the RNase H type-1 domain. Aspartate 1057, glutamate 1092, aspartate 1112, and aspartate 1163 together coordinate Mg(2+). The Integrase-type zinc-finger motif lies at 1177–1218 (EKIEEAQEEHERYHNNWRNLADTYGLPQIVAKEIVAMCPKCQ). 4 residues coordinate Zn(2+): histidine 1186, histidine 1190, cysteine 1214, and cysteine 1217. One can recognise an Integrase catalytic domain in the interval 1228–1378 (VDASPGVWQM…TPAERLINMI (151 aa)). The Mg(2+) site is built by aspartate 1238 and aspartate 1290. The integrase-type DNA-binding region spans 1397–1444 (FRVYYREGRDPVWKGPGQLIWKGEGAVVIKGGVELKEYPRRKAKIIKD).

As to quaternary structure, homotrimer. Interacts with gp41 (via C-terminus). In terms of assembly, homodimer. The active site consists of two apposed aspartic acid residues. Heterodimer of p66 RT and p51 RT (RT p66/p51). Heterodimerization of RT is essential for DNA polymerase activity. Despite the sequence identities, p66 RT and p51 RT have distinct folding. As to quaternary structure, homotetramer; may further associate as a homohexadecamer. It depends on Mg(2+) as a cofactor. Specific enzymatic cleavages by the viral protease yield mature proteins. The protease is released by autocatalytic cleavage. The polyprotein is cleaved during and after budding, this process is termed maturation. Proteolytic cleavage of p66 RT removes the RNase H domain to yield the p51 RT subunit. In terms of processing, capsid protein p24 is phosphorylated.

Its subcellular location is the virion. It is found in the host nucleus. It localises to the host cytoplasm. The protein localises to the host cell membrane. The enzyme catalyses Specific for a P1 residue that is hydrophobic, and P1' variable, but often Pro.. The catalysed reaction is Endohydrolysis of RNA in RNA/DNA hybrids. Three different cleavage modes: 1. sequence-specific internal cleavage of RNA. Human immunodeficiency virus type 1 and Moloney murine leukemia virus enzymes prefer to cleave the RNA strand one nucleotide away from the RNA-DNA junction. 2. RNA 5'-end directed cleavage 13-19 nucleotides from the RNA end. 3. DNA 3'-end directed cleavage 15-20 nucleotides away from the primer terminus.. It catalyses the reaction 3'-end directed exonucleolytic cleavage of viral RNA-DNA hybrid.. It carries out the reaction DNA(n) + a 2'-deoxyribonucleoside 5'-triphosphate = DNA(n+1) + diphosphate. The viral protease is inhibited by many synthetic protease inhibitors (PIs), such as amprenavir, atazanavir, indinavir, loprinavir, nelfinavir, ritonavir and saquinavir. RT can be inhibited either by nucleoside RT inhibitors (NRTIs) or by non nucleoside RT inhibitors (NNRTIs). NRTIs act as chain terminators, whereas NNRTIs inhibit DNA polymerization by binding a small hydrophobic pocket near the RT active site and inducing an allosteric change in this region. Classical NRTIs are abacavir, adefovir (PMEA), didanosine (ddI), lamivudine (3TC), stavudine (d4T), tenofovir (PMPA), zalcitabine (ddC), and zidovudine (AZT). Classical NNRTIs are atevirdine (BHAP U-87201E), delavirdine, efavirenz (DMP-266), emivirine (I-EBU), and nevirapine (BI-RG-587). The tritherapies used as a basic effective treatment of AIDS associate two NRTIs and one NNRTI. Use of protease inhibitors in tritherapy regimens permit more ambitious therapeutic strategies. In terms of biological role, gag-Pol polyprotein and Gag polyprotein may regulate their own translation, by the binding genomic RNA in the 5'-UTR. At low concentration, Gag-Pol and Gag would promote translation, whereas at high concentration, the polyproteins encapsidate genomic RNA and then shut off translation. Functionally, matrix protein p17 has two main functions: in infected cell, it targets Gag and Gag-pol polyproteins to the plasma membrane via a multipartite membrane-binding signal, that includes its myristointegration complex. The myristoylation signal and the NLS exert conflicting influences its subcellular localization. The key regulation of these motifs might be phosphorylation of a portion of MA molecules on the C-terminal tyrosine at the time of virus maturation, by virion-associated cellular tyrosine kinase. Implicated in the release from host cell mediated by Vpu. Its function is as follows. Capsid protein p24 forms the conical core that encapsulates the genomic RNA-nucleocapsid complex in the virion. The core is constituted by capsid protein hexamer subunits. The core is disassembled soon after virion entry. Interaction with host PPIA/CYPA protects the virus from restriction by host TRIM5-alpha and from an unknown antiviral activity in host cells. This capsid restriction by TRIM5 is one of the factors which restricts SIV to the simian species. Nucleocapsid protein p7 encapsulates and protects viral dimeric unspliced (genomic) RNA. Binds these RNAs through its zinc fingers. Facilitates rearangement of nucleic acid secondary structure during retrotranscription of genomic RNA. This capability is referred to as nucleic acid chaperone activity. In terms of biological role, the aspartyl protease mediates proteolytic cleavages of Gag and Gag-Pol polyproteins during or shortly after the release of the virion from the plasma membrane. Cleavages take place as an ordered, step-wise cascade to yield mature proteins. This process is called maturation. Displays maximal activity during the budding process just prior to particle release from the cell. Also cleaves Nef and Vif, probably concomitantly with viral structural proteins on maturation of virus particles. Hydrolyzes host EIF4GI and PABP1 in order to shut off the capped cellular mRNA translation. The resulting inhibition of cellular protein synthesis serves to ensure maximal viral gene expression and to evade host immune response. Functionally, reverse transcriptase/ribonuclease H (RT) is a multifunctional enzyme that converts the viral dimeric RNA genome into dsDNA in the cytoplasm, shortly after virus entry into the cell. This enzyme displays a DNA polymerase activity that can copy either DNA or RNA templates, and a ribonuclease H (RNase H) activity that cleaves the RNA strand of RNA-DNA heteroduplexes in a partially processive 3' to 5' endonucleasic mode. Conversion of viral genomic RNA into dsDNA requires many steps. A tRNA binds to the primer-binding site (PBS) situated at the 5'-end of the viral RNA. RT uses the 3' end of the tRNA primer to perform a short round of RNA-dependent minus-strand DNA synthesis. The reading proceeds through the U5 region and ends after the repeated (R) region which is present at both ends of viral RNA. The portion of the RNA-DNA heteroduplex is digested by the RNase H, resulting in a ssDNA product attached to the tRNA primer. This ssDNA/tRNA hybridizes with the identical R region situated at the 3' end of viral RNA. This template exchange, known as minus-strand DNA strong stop transfer, can be either intra- or intermolecular. RT uses the 3' end of this newly synthesized short ssDNA to perform the RNA-dependent minus-strand DNA synthesis of the whole template. RNase H digests the RNA template except for two polypurine tracts (PPTs) situated at the 5'-end and near the center of the genome. It is not clear if both polymerase and RNase H activities are simultaneous. RNase H can probably proceed both in a polymerase-dependent (RNA cut into small fragments by the same RT performing DNA synthesis) and a polymerase-independent mode (cleavage of remaining RNA fragments by free RTs). Secondly, RT performs DNA-directed plus-strand DNA synthesis using the PPTs that have not been removed by RNase H as primers. PPTs and tRNA primers are then removed by RNase H. The 3' and 5' ssDNA PBS regions hybridize to form a circular dsDNA intermediate. Strand displacement synthesis by RT to the PBS and PPT ends produces a blunt ended, linear dsDNA copy of the viral genome that includes long terminal repeats (LTRs) at both ends. Its function is as follows. Integrase catalyzes viral DNA integration into the host chromosome, by performing a series of DNA cutting and joining reactions. This enzyme activity takes place after virion entry into a cell and reverse transcription of the RNA genome in dsDNA. The first step in the integration process is 3' processing. This step requires a complex comprising the viral genome, matrix protein, Vpr and integrase. This complex is called the pre-integration complex (PIC). The integrase protein removes 2 nucleotides from each 3' end of the viral DNA, leaving recessed CA OH's at the 3' ends. In the second step, the PIC enters cell nucleus. This process is mediated through integrase and Vpr proteins, and allows the virus to infect a non dividing cell. This ability to enter the nucleus is specific of lentiviruses, other retroviruses cannot and rely on cell division to access cell chromosomes. In the third step, termed strand transfer, the integrase protein joins the previously processed 3' ends to the 5' ends of strands of target cellular DNA at the site of integration. The 5'-ends are produced by integrase-catalyzed staggered cuts, 5 bp apart. A Y-shaped, gapped, recombination intermediate results, with the 5'-ends of the viral DNA strands and the 3' ends of target DNA strands remaining unjoined, flanking a gap of 5 bp. The last step is viral DNA integration into host chromosome. This involves host DNA repair synthesis in which the 5 bp gaps between the unjoined strands are filled in and then ligated. Since this process occurs at both cuts flanking the SIV genome, a 5 bp duplication of host DNA is produced at the ends of SIV integration. Alternatively, Integrase may catalyze the excision of viral DNA just after strand transfer, this is termed disintegration. This is Gag-Pol polyprotein (gag-pol) from Cercopithecidae (Old World monkeys).